Reading from the N-terminus, the 355-residue chain is Phospho-N-acetylmuramoyl-pentapeptide-transferase (355 aa).

A run of 10 helical transmembrane segments spans residues 3 to 23, 56 to 76, 80 to 100, 120 to 140, 156 to 176, 185 to 205, 224 to 244, 251 to 271, 276 to 296, and 330 to 350; these read GVLI…PWVI, VIIV…GIGF, GLLV…DDYI, AAVA…AGLL, VGII…SNAV, LAAG…FWQF, PLDV…FLWW, IFMG…IAIV, LLLV…MIQV, and FWIV…AEFL.

It belongs to the glycosyltransferase 4 family. MraY subfamily. Mg(2+) is required as a cofactor.

Its subcellular location is the cell membrane. It carries out the reaction UDP-N-acetyl-alpha-D-muramoyl-L-alanyl-gamma-D-glutamyl-meso-2,6-diaminopimeloyl-D-alanyl-D-alanine + di-trans,octa-cis-undecaprenyl phosphate = di-trans,octa-cis-undecaprenyl diphospho-N-acetyl-alpha-D-muramoyl-L-alanyl-D-glutamyl-meso-2,6-diaminopimeloyl-D-alanyl-D-alanine + UMP. Its pathway is cell wall biogenesis; peptidoglycan biosynthesis. Catalyzes the initial step of the lipid cycle reactions in the biosynthesis of the cell wall peptidoglycan: transfers peptidoglycan precursor phospho-MurNAc-pentapeptide from UDP-MurNAc-pentapeptide onto the lipid carrier undecaprenyl phosphate, yielding undecaprenyl-pyrophosphoryl-MurNAc-pentapeptide, known as lipid I. The sequence is that of Phospho-N-acetylmuramoyl-pentapeptide-transferase from Frankia casuarinae (strain DSM 45818 / CECT 9043 / HFP020203 / CcI3).